The chain runs to 77 residues: Translation initiation factor IF-1, chloroplastic (77 aa).

An S1-like domain is found at 1–72; the sequence is MRKQNLIEME…TKGRITYRLR (72 aa).

This sequence belongs to the IF-1 family. Component of the 30S ribosomal translation pre-initiation complex which assembles on the 30S ribosome in the order IF-2 and IF-3, IF-1 and N-formylmethionyl-tRNA(fMet); mRNA recruitment can occur at any time during PIC assembly.

Its subcellular location is the plastid. The protein localises to the chloroplast. One of the essential components for the initiation of protein synthesis. Stabilizes the binding of IF-2 and IF-3 on the 30S subunit to which N-formylmethionyl-tRNA(fMet) subsequently binds. Helps modulate mRNA selection, yielding the 30S pre-initiation complex (PIC). Upon addition of the 50S ribosomal subunit IF-1, IF-2 and IF-3 are released leaving the mature 70S translation initiation complex. The sequence is that of Translation initiation factor IF-1, chloroplastic from Staurastrum punctulatum (Green alga).